Here is a 256-residue protein sequence, read N- to C-terminus: Ribosomal RNA small subunit methyltransferase A (256 aa).

6 residues coordinate S-adenosyl-L-methionine: histidine 12, leucine 14, glycine 39, glutamate 60, aspartate 81, and asparagine 103.

It belongs to the class I-like SAM-binding methyltransferase superfamily. rRNA adenine N(6)-methyltransferase family. RsmA subfamily.

Its subcellular location is the cytoplasm. The catalysed reaction is adenosine(1518)/adenosine(1519) in 16S rRNA + 4 S-adenosyl-L-methionine = N(6)-dimethyladenosine(1518)/N(6)-dimethyladenosine(1519) in 16S rRNA + 4 S-adenosyl-L-homocysteine + 4 H(+). In terms of biological role, specifically dimethylates two adjacent adenosines (A1518 and A1519) in the loop of a conserved hairpin near the 3'-end of 16S rRNA in the 30S particle. May play a critical role in biogenesis of 30S subunits. In Methylibium petroleiphilum (strain ATCC BAA-1232 / LMG 22953 / PM1), this protein is Ribosomal RNA small subunit methyltransferase A.